The following is a 975-amino-acid chain: Kinesin-like protein KIN-14K (975 aa).

A disordered region spans residues methionine 1–lysine 40. Residues arginine 17–serine 30 are compositionally biased toward low complexity. Over residues glutamate 31–lysine 40 the composition is skewed to basic and acidic residues. The region spanning lysine 40–serine 143 is the Calponin-homology (CH) domain. A coiled-coil region spans residues lysine 289–leucine 345. The Kinesin motor domain maps to asparagine 436 to valine 746. Glycine 520–threonine 527 provides a ligand contact to ATP. Positions glycine 757–asparagine 788 form a coiled coil. 2 disordered regions span residues valine 801–aspartate 852 and leucine 900–arginine 975. The span at leucine 944–lysine 958 shows a compositional bias: low complexity.

The protein belongs to the TRAFAC class myosin-kinesin ATPase superfamily. Kinesin family. KIN-14 subfamily.

This chain is Kinesin-like protein KIN-14K, found in Arabidopsis thaliana (Mouse-ear cress).